The primary structure comprises 838 residues: Semaphorin-4G (838 aa).

A signal peptide spans 1-17 (MWGRLWPLLLSILTATA). Over 18–675 (VPGPSLRRPS…GAQLAPDVRL (658 aa)) the chain is Extracellular. The Sema domain maps to 35–505 (RMTIPYEELS…APSGVIQLPL (471 aa)). N-linked (GlcNAc...) asparagine glycans are attached at residues Asn55, Asn111, and Asn126. An intrachain disulfide couples Cys104 to Cys115. 3 disulfide bridges follow: Cys133-Cys142, Cys270-Cys377, and Cys294-Cys337. Asn388 carries an N-linked (GlcNAc...) asparagine glycan. The region spanning 507–558 (SCSRYRSCYDCILARDPYCGWDPGTHACAAATTIANRTALIQDIERGNRGCE) is the PSI domain. 2 cysteine pairs are disulfide-bonded: Cys508-Cys525 and Cys517-Cys534. Asn542 and Asn598 each carry an N-linked (GlcNAc...) asparagine glycan. One can recognise an Ig-like C2-type domain in the interval 567-649 (PPLKTRSVLR…RTLLASYSLT (83 aa)). An intrachain disulfide couples Cys584 to Cys632. The chain crosses the membrane as a helical span at residues 676–696 (LYVLAIAALGGLCLILASSLL). The Cytoplasmic portion of the chain corresponds to 697-838 (YVACLREGRR…LVEQLDESSV (142 aa)). Residues 723-777 (SAVQLQTVSGQCPGEEDEGDDEGAGGLEGSCLQIIPGEGAPAPPPPPPPPPPAEL) form a disordered region. Positions 736–745 (GEEDEGDDEG) are enriched in acidic residues. Over residues 763 to 775 (PAPPPPPPPPPPA) the composition is skewed to pro residues. A phosphoserine mark is found at Ser795 and Ser837.

The protein belongs to the semaphorin family. Interacts with PLXNB2.

It localises to the cell membrane. Cell surface receptor for PLXNB2. May play a role in axon guidance. This Homo sapiens (Human) protein is Semaphorin-4G (SEMA4G).